The chain runs to 499 residues: Probable cytosol aminopeptidase (499 aa).

Positions 263 and 268 each coordinate Mn(2+). Residue Lys275 is part of the active site. Residues Asp286, Asp345, and Glu347 each contribute to the Mn(2+) site. Arg349 is a catalytic residue.

It belongs to the peptidase M17 family. The cofactor is Mn(2+).

The protein resides in the cytoplasm. The enzyme catalyses Release of an N-terminal amino acid, Xaa-|-Yaa-, in which Xaa is preferably Leu, but may be other amino acids including Pro although not Arg or Lys, and Yaa may be Pro. Amino acid amides and methyl esters are also readily hydrolyzed, but rates on arylamides are exceedingly low.. It catalyses the reaction Release of an N-terminal amino acid, preferentially leucine, but not glutamic or aspartic acids.. Its function is as follows. Presumably involved in the processing and regular turnover of intracellular proteins. Catalyzes the removal of unsubstituted N-terminal amino acids from various peptides. This Chlamydia trachomatis serovar D (strain ATCC VR-885 / DSM 19411 / UW-3/Cx) protein is Probable cytosol aminopeptidase (pepA).